Here is a 339-residue protein sequence, read N- to C-terminus: Ketol-acid reductoisomerase (NADP(+)) (339 aa).

Residues 1–182 enclose the KARI N-terminal Rossmann domain; the sequence is MRVYYDRDAD…GGGRSGVIET (182 aa). NADP(+) is bound by residues 24-27, arginine 48, serine 51, threonine 53, and 83-86; these read YGSQ and DELQ. Residue histidine 108 is part of the active site. Glycine 134 contacts NADP(+). One can recognise a KARI C-terminal knotted domain in the interval 183-328; it reads NFREECETDL…GRLRAMMPWI (146 aa). Aspartate 191, glutamate 195, glutamate 227, and glutamate 231 together coordinate Mg(2+). Serine 252 serves as a coordination point for substrate.

This sequence belongs to the ketol-acid reductoisomerase family. Mg(2+) serves as cofactor.

The catalysed reaction is (2R)-2,3-dihydroxy-3-methylbutanoate + NADP(+) = (2S)-2-acetolactate + NADPH + H(+). It carries out the reaction (2R,3R)-2,3-dihydroxy-3-methylpentanoate + NADP(+) = (S)-2-ethyl-2-hydroxy-3-oxobutanoate + NADPH + H(+). It participates in amino-acid biosynthesis; L-isoleucine biosynthesis; L-isoleucine from 2-oxobutanoate: step 2/4. It functions in the pathway amino-acid biosynthesis; L-valine biosynthesis; L-valine from pyruvate: step 2/4. Its function is as follows. Involved in the biosynthesis of branched-chain amino acids (BCAA). Catalyzes an alkyl-migration followed by a ketol-acid reduction of (S)-2-acetolactate (S2AL) to yield (R)-2,3-dihydroxy-isovalerate. In the isomerase reaction, S2AL is rearranged via a Mg-dependent methyl migration to produce 3-hydroxy-3-methyl-2-ketobutyrate (HMKB). In the reductase reaction, this 2-ketoacid undergoes a metal-dependent reduction by NADPH to yield (R)-2,3-dihydroxy-isovalerate. This is Ketol-acid reductoisomerase (NADP(+)) from Phenylobacterium zucineum (strain HLK1).